The following is a 482-amino-acid chain: Glutamate-rich WD repeat-containing protein 1 (482 aa).

Disordered regions lie at residues 1 to 75 (MSSK…WRAG) and 148 to 180 (QLHKTKHDDEDSDDDEDSDDDEESDDEDDEDKD). Acidic residues-rich tracts occupy residues 27–63 (NGEDDFENDDEVESFEDDEQSFEEIEEGGEEGGDNDG) and 157–180 (EDSDDDEDSDDDEESDDEDDEDKD). WD repeat units follow at residues 191–231 (NHNG…KALD), 294–334 (GHTE…PAIT), 337–377 (AHTA…DNSP), 383–423 (YHTG…DTEE), and 446–482 (QGQHDIKEVHWHPQIPHVAISTSIDGFNIFKSSNSEE).

The protein localises to the nucleus. It localises to the nucleolus. This is Glutamate-rich WD repeat-containing protein 1 (grwd1) from Dictyostelium discoideum (Social amoeba).